The following is a 649-amino-acid chain: Threonine--tRNA ligase (649 aa).

The TGS domain maps to Met-1–Thr-60. Residues Asp-248–Pro-544 form a catalytic region. Cys-341, His-392, and His-521 together coordinate Zn(2+).

The protein belongs to the class-II aminoacyl-tRNA synthetase family. Homodimer. It depends on Zn(2+) as a cofactor.

It localises to the cytoplasm. The enzyme catalyses tRNA(Thr) + L-threonine + ATP = L-threonyl-tRNA(Thr) + AMP + diphosphate + H(+). Catalyzes the attachment of threonine to tRNA(Thr) in a two-step reaction: L-threonine is first activated by ATP to form Thr-AMP and then transferred to the acceptor end of tRNA(Thr). Also edits incorrectly charged L-seryl-tRNA(Thr). The sequence is that of Threonine--tRNA ligase from Deinococcus geothermalis (strain DSM 11300 / CIP 105573 / AG-3a).